We begin with the raw amino-acid sequence, 264 residues long: MAKLLLFLLPAILGLLVPRSAVALGTNYLLSGQTLDREGHLKNGDFDLVMQDDCNLVLYNGNWQSNTANKGRDCKLTLTDYGELVIKNGDGSTVWRSRAQSVKGNYAAVVHPDGRLVVFGPSVFKIDPWVPGLNSLRFRNIPFTNNLLFSGQVLYGDGRLTAKSHQLVMQGDCNLVLYGGKYGWQSNTHGNGEHCFLRLNHKGELIIKDDDFKTIWSSSSSSKHGDYVLILRDDGFAVIYGPAIWETSPQAKEKMIGMVTAGKL.

The signal sequence occupies residues 1 to 23 (MAKLLLFLLPAILGLLVPRSAVA). 2 Bulb-type lectin domains span residues 26-131 (TNYL…PWVP) and 145-252 (NNLL…PQAK). Beta-D-mannose is bound by residues 51 to 55 (QDDCN), tyrosine 59, tryptophan 63, glutamine 64, 170 to 174 (QGDCN), tyrosine 178, and 182 to 185 (YGWQ). A Carbohydrate-binding motif 1 motif is present at residues 51 to 59 (QDDCNLVLY). Intrachain disulfides connect cysteine 54-cysteine 74 and cysteine 173-cysteine 195. The Carbohydrate-binding motif 2 signature appears at 170–178 (QGDCNLVLY).

In terms of assembly, forms heterotetramer of 2 chains 1 and 2 chains 2 arranged as a dimer of chain 1 and chain 2 heterodimers.

Its subcellular location is the secreted. Its function is as follows. Mannose-specific lectin. Shows agglutinating activity towards erythrocytes from rabbit. Has insecticidal activity against cotton aphids and other hemipteran insects. This is Mannose-specific lectin CEA from Colocasia esculenta (Wild taro).